A 216-amino-acid chain; its full sequence is Orotate phosphoribosyltransferase (216 aa).

Lys-30 contacts 5-phospho-alpha-D-ribose 1-diphosphate. 38–39 provides a ligand contact to orotate; sequence FF. 5-phospho-alpha-D-ribose 1-diphosphate-binding positions include 75 to 76, Arg-102, Lys-103, Lys-106, His-108, and 128 to 136; these read YK and DDVITAGTA. Thr-132 and Arg-160 together coordinate orotate.

Belongs to the purine/pyrimidine phosphoribosyltransferase family. PyrE subfamily. Homodimer. Mg(2+) serves as cofactor.

It catalyses the reaction orotidine 5'-phosphate + diphosphate = orotate + 5-phospho-alpha-D-ribose 1-diphosphate. It functions in the pathway pyrimidine metabolism; UMP biosynthesis via de novo pathway; UMP from orotate: step 1/2. Functionally, catalyzes the transfer of a ribosyl phosphate group from 5-phosphoribose 1-diphosphate to orotate, leading to the formation of orotidine monophosphate (OMP). This chain is Orotate phosphoribosyltransferase, found in Acinetobacter baumannii (strain AB307-0294).